Here is a 337-residue protein sequence, read N- to C-terminus: Anthranilate phosphoribosyltransferase (337 aa).

5-phospho-alpha-D-ribose 1-diphosphate contacts are provided by residues glycine 82, 85–86, threonine 90, 92–95, 110–118, and serine 122; these read GD, NIST, and KHGGRSVSS. Glycine 82 is an anthranilate binding site. Serine 94 is a Mg(2+) binding site. Position 168 (arginine 168) interacts with anthranilate. 2 residues coordinate Mg(2+): aspartate 226 and glutamate 227.

This sequence belongs to the anthranilate phosphoribosyltransferase family. Homodimer. It depends on Mg(2+) as a cofactor.

The enzyme catalyses N-(5-phospho-beta-D-ribosyl)anthranilate + diphosphate = 5-phospho-alpha-D-ribose 1-diphosphate + anthranilate. It functions in the pathway amino-acid biosynthesis; L-tryptophan biosynthesis; L-tryptophan from chorismate: step 2/5. Functionally, catalyzes the transfer of the phosphoribosyl group of 5-phosphorylribose-1-pyrophosphate (PRPP) to anthranilate to yield N-(5'-phosphoribosyl)-anthranilate (PRA). This Francisella tularensis subsp. tularensis (strain WY96-3418) protein is Anthranilate phosphoribosyltransferase.